Here is a 307-residue protein sequence, read N- to C-terminus: Ribonuclease Z (307 aa).

7 residues coordinate Zn(2+): histidine 64, histidine 66, aspartate 68, histidine 69, histidine 141, aspartate 209, and histidine 267. Aspartate 68 acts as the Proton acceptor in catalysis.

Belongs to the RNase Z family. As to quaternary structure, homodimer. It depends on Zn(2+) as a cofactor.

It catalyses the reaction Endonucleolytic cleavage of RNA, removing extra 3' nucleotides from tRNA precursor, generating 3' termini of tRNAs. A 3'-hydroxy group is left at the tRNA terminus and a 5'-phosphoryl group is left at the trailer molecule.. Zinc phosphodiesterase, which displays some tRNA 3'-processing endonuclease activity. Probably involved in tRNA maturation, by removing a 3'-trailer from precursor tRNA. This Thermoplasma acidophilum (strain ATCC 25905 / DSM 1728 / JCM 9062 / NBRC 15155 / AMRC-C165) protein is Ribonuclease Z.